Consider the following 596-residue polypeptide: Aspartic proteinase yapsin-7 (596 aa).

The first 25 residues, 1 to 25 (MTCLILWYLWLISTFQLEFATASTA), serve as a signal peptide directing secretion. N26 and N59 each carry an N-linked (GlcNAc...) asparagine glycan. The Lumenal portion of the chain corresponds to 26–575 (NTTTTAKSGT…SPYTFNKDPA (550 aa)). One can recognise a Peptidase A1 domain in the interval 56-440 (YYVNSTFGTP…DLEDNTIAIA (385 aa)). Residue D74 is part of the active site. N-linked (GlcNAc...) asparagine glycans are attached at residues N106, N131, N140, N143, N148, N175, and N308. D321 is a catalytic residue. 6 N-linked (GlcNAc...) asparagine glycosylation sites follow: N391, N455, N478, N484, N549, and N552. A helical membrane pass occupies residues 576 to 596 (GHVTRIASLLLLSIFSILIVL).

Belongs to the peptidase A1 family.

It is found in the cytoplasm. The protein resides in the endoplasmic reticulum membrane. The chain is Aspartic proteinase yapsin-7 (YPS7) from Saccharomyces cerevisiae (strain ATCC 204508 / S288c) (Baker's yeast).